The following is a 126-amino-acid chain: Large ribosomal subunit protein bL12 (126 aa).

Belongs to the bacterial ribosomal protein bL12 family. In terms of assembly, homodimer. Part of the ribosomal stalk of the 50S ribosomal subunit. Forms a multimeric L10(L12)X complex, where L10 forms an elongated spine to which 2 to 4 L12 dimers bind in a sequential fashion. Binds GTP-bound translation factors.

Forms part of the ribosomal stalk which helps the ribosome interact with GTP-bound translation factors. Is thus essential for accurate translation. This is Large ribosomal subunit protein bL12 from Acidovorax sp. (strain JS42).